A 503-amino-acid polypeptide reads, in one-letter code: D-xylose-proton symporter-like 1 (503 aa).

Positions 1 to 23 (MGFDPENQSISSVGQVVGDSSSG) are disordered. The span at 8 to 23 (QSISSVGQVVGDSSSG) shows a compositional bias: low complexity. 12 helical membrane passes run 51 to 73 (FLFP…CAIM), 95 to 115 (IITS…FSVA), 129 to 149 (FLYL…ILII), 152 to 172 (VTYG…IAET), 190 to 210 (VLGM…ISGW), 213 to 233 (MYAT…WLPA), 305 to 325 (ALTI…PSVL), 346 to 366 (ISIL…IVID), 374 to 394 (LLCG…YYMF), 405 to 425 (ALLL…WLMI), 437 to 457 (GISL…FAFS), and 467 to 487 (ILFC…YYIV).

This sequence belongs to the major facilitator superfamily. Sugar transporter (TC 2.A.1.1) family.

It is found in the membrane. This Arabidopsis thaliana (Mouse-ear cress) protein is D-xylose-proton symporter-like 1.